The sequence spans 904 residues: Alanine--tRNA ligase (904 aa).

The Zn(2+) site is built by histidine 584, histidine 588, cysteine 687, and histidine 691.

It belongs to the class-II aminoacyl-tRNA synthetase family. It depends on Zn(2+) as a cofactor.

Its subcellular location is the cytoplasm. The enzyme catalyses tRNA(Ala) + L-alanine + ATP = L-alanyl-tRNA(Ala) + AMP + diphosphate. Catalyzes the attachment of alanine to tRNA(Ala) in a two-step reaction: alanine is first activated by ATP to form Ala-AMP and then transferred to the acceptor end of tRNA(Ala). Also edits incorrectly charged Ser-tRNA(Ala) and Gly-tRNA(Ala) via its editing domain. This Mycobacterium tuberculosis (strain ATCC 25177 / H37Ra) protein is Alanine--tRNA ligase.